We begin with the raw amino-acid sequence, 777 residues long: Kelch domain-containing protein 7A (777 aa).

A helical membrane pass occupies residues 21-38 (VVLSAAALLLVTVAYRLY). A disordered region spans residues 43–207 (APAQRWGGNG…GLGQLEPPHC (165 aa)). Position 86 is a phosphoserine (Ser86). Positions 113–127 (TDRKPQRKGSGEERG) are enriched in basic and acidic residues. An N-linked (GlcNAc...) asparagine glycan is attached at Asn257. The disordered stretch occupies residues 313 to 359 (LTEVPSPRPPPGSLGTGAASGGQAGDTKGAAERAASPQTGPWPSTRG). Gly residues predominate over residues 326 to 336 (LGTGAASGGQA). 5 Kelch repeats span residues 328–374 (TGAA…ENPE), 492–538 (QYLV…ICSL), 541–589 (YLFV…ALDG), 590–632 (HLYA…ATVR), and 635–677 (EIFV…AVNG). Position 365 is a phosphoserine (Ser365).

The protein resides in the membrane. The protein is Kelch domain-containing protein 7A (KLHDC7A) of Homo sapiens (Human).